The sequence spans 330 residues: Methionyl-tRNA formyltransferase (330 aa).

Residue 117 to 120 (SLLP) coordinates (6S)-5,6,7,8-tetrahydrofolate.

It belongs to the Fmt family.

The enzyme catalyses L-methionyl-tRNA(fMet) + (6R)-10-formyltetrahydrofolate = N-formyl-L-methionyl-tRNA(fMet) + (6S)-5,6,7,8-tetrahydrofolate + H(+). Functionally, attaches a formyl group to the free amino group of methionyl-tRNA(fMet). The formyl group appears to play a dual role in the initiator identity of N-formylmethionyl-tRNA by promoting its recognition by IF2 and preventing the misappropriation of this tRNA by the elongation apparatus. This is Methionyl-tRNA formyltransferase from Verminephrobacter eiseniae (strain EF01-2).